We begin with the raw amino-acid sequence, 262 residues long: Putative ABC transporter ATP-binding protein SAV_3608 (262 aa).

The ABC transporter domain maps to 18 to 248 (LDVAGLAFAY…DTLMRAHRLE (231 aa)). 51–58 (GPNGAGKT) is a binding site for ATP.

This sequence belongs to the ABC transporter superfamily.

It localises to the cell membrane. In terms of biological role, probably part of an ABC transporter complex. Responsible for energy coupling to the transport system. In Streptomyces avermitilis (strain ATCC 31267 / DSM 46492 / JCM 5070 / NBRC 14893 / NCIMB 12804 / NRRL 8165 / MA-4680), this protein is Putative ABC transporter ATP-binding protein SAV_3608.